The following is a 651-amino-acid chain: Translation initiation factor eIF2B subunit delta (651 aa).

Residues 1–108 are disordered; that stretch reads MSESEAKSRS…NERNVKKSTL (108 aa). S2 carries the N-acetylserine modification. Residues 11 to 28 show a composition bias toward low complexity; that stretch reads ATPPSKAKQATPTTTAAA. Basic and acidic residues-rich tracts occupy residues 30–49 and 76–90; these read GEKK…EKAA and KQLQ…EQKQ. A Phosphoserine modification is found at S106. Phosphothreonine is present on T121. Positions 566 to 600 are disordered; the sequence is AMENKPKGNKIGGKKGSEGESKDASNEEDSNSKNI. Over residues 580–590 the composition is skewed to basic and acidic residues; it reads KGSEGESKDAS.

This sequence belongs to the eIF-2B alpha/beta/delta subunits family. Component of the translation initiation factor 2B (eIF2B) complex which is a heterodecamer of two sets of five different subunits: alpha, beta, gamma, delta and epsilon. Subunits alpha, beta and delta comprise a regulatory subcomplex and subunits epsilon and gamma comprise a catalytic subcomplex. Within the complex, the hexameric regulatory complex resides at the center, with the two heterodimeric catalytic subcomplexes bound on opposite sides.

It is found in the cytoplasm. The protein resides in the cytosol. In terms of biological role, acts as a component of the translation initiation factor 2B (eIF2B) complex, which catalyzes the exchange of GDP for GTP on the eukaryotic initiation factor 2 (eIF2) complex gamma subunit. Its guanine nucleotide exchange factor activity is repressed when bound to eIF2 complex phosphorylated on the alpha subunit, thereby limiting the amount of methionyl-initiator methionine tRNA available to the ribosome and consequently global translation is repressed. It activates the synthesis of GCN4 in yeast under amino acid starvation conditions by suppressing the inhibitory effects of multiple AUG codons present in the leader of GCN4 mRNA. It may promote either repression or activation of GCN4 expression depending on amino acid availability. GCD2 is also required for cell viability. Its function can partially be replaced by GCN3 under normal growth conditions in GCD2-defective mutants, under AA starvation conditions GCN3 is an antagonist (GCN4 translational activator). This is Translation initiation factor eIF2B subunit delta (GCD2) from Saccharomyces cerevisiae (strain ATCC 204508 / S288c) (Baker's yeast).